We begin with the raw amino-acid sequence, 23 residues long: 48 kDa cell wall protein (23 aa).

Its subcellular location is the secreted. The protein resides in the cell wall. The polypeptide is 48 kDa cell wall protein (Nicotiana tabacum (Common tobacco)).